The following is a 508-amino-acid chain: Protein DETOXIFICATION 52 (508 aa).

12 helical membrane passes run 48–68, 78–98, 122–142, 156–176, 189–209, 222–242, 270–290, 300–320, 341–361, 368–388, 415–437, and 441–463; these read ILAALILYARSAISMLFLGHI, LAIAFANITGYSVLAGLALGM, VLFLLTSSVVIVALWLNLGKI, AQTYILCSIPDLLTNSFLHPL, LTLATLAGTIFHIPMNFFLVS, AAASNLLVVIFLVAHVWIAGL, IGVCLEWWWYEIMTVLCGLLI, GILIQTTSLLYIFPSSLGLAV, IVAVSFAGVMGLTASAFAWGV, IFTNDVAIIKLTAAALPILGL, INLGAFYLVGTPVAVGLTFWAAY, and GLWVGLLAAQICCAAMMLYVVAT.

It belongs to the multi antimicrobial extrusion (MATE) (TC 2.A.66.1) family. In terms of tissue distribution, detected in the part of the veins in cotyledons of 6-day-old seedlings and the basal parts of the petioles in older plants. Highly expressed in the vascular tissues of hypocotyl in dark-grown seedlings.

It is found in the late endosome membrane. May act as a negative regulator of hypocotyl cell elongation in the light. This Arabidopsis thaliana (Mouse-ear cress) protein is Protein DETOXIFICATION 52.